Consider the following 401-residue polypeptide: Homocysteine-responsive endoplasmic reticulum-resident ubiquitin-like domain member 2 protein (401 aa).

A Ubiquitin-like domain is found at 10 to 89; it reads VTLIIKAPNQ…HMVHLVCASR (80 aa). The tract at residues 87 to 137 is disordered; it reads ASRSPPSSPKSSTDGESHGALASSTNSNSDHSDSTTPSPSQESLSLVAGSS. Low complexity-rich tracts occupy residues 88–98 and 109–126; these read SRSPPSSPKSS and SSTNSNSDHSDSTTPSPS. A helical membrane pass occupies residues 299–319; that stretch reads FIMVMGAMLLVYLHQAGWFPF.

It localises to the membrane. Its function is as follows. Could be involved in the unfolded protein response (UPR) pathway. In Rattus norvegicus (Rat), this protein is Homocysteine-responsive endoplasmic reticulum-resident ubiquitin-like domain member 2 protein (Herpud2).